A 111-amino-acid chain; its full sequence is Ig kappa chain V-III region PC 2485/PC 4039 (111 aa).

The segment at 1–23 (DIVLTQSPASLAVSLGQRATISC) is framework-1. Cysteine 23 and cysteine 92 are disulfide-bonded. The segment at 24-38 (RASKSVSTSGYSYMH) is complementarity-determining-1. A framework-2 region spans residues 39-53 (WYQQKPGQPPKLLIY). The complementarity-determining-2 stretch occupies residues 54 to 60 (LASSLES). The tract at residues 61–92 (GVPARFSGSGSGTDFTLNIQPVEEEDAAIYYC) is framework-3. The segment at 93–101 (QHSRELPLT) is complementarity-determining-3. The segment at 102–111 (FGAGTKLELK) is framework-4.

This Mus musculus (Mouse) protein is Ig kappa chain V-III region PC 2485/PC 4039.